A 226-amino-acid polypeptide reads, in one-letter code: Uridylate kinase (226 aa).

An ATP-binding site is contributed by 9 to 13 (KVSGK). Residue glycine 46 coordinates UMP. Residues glycine 47 and arginine 51 each coordinate ATP. UMP-binding positions include aspartate 68 and 116–122 (FQPGQST). ATP-binding residues include threonine 142, tyrosine 148, and aspartate 151.

Belongs to the UMP kinase family. Homohexamer.

Its subcellular location is the cytoplasm. It catalyses the reaction UMP + ATP = UDP + ADP. The protein operates within pyrimidine metabolism; CTP biosynthesis via de novo pathway; UDP from UMP (UMPK route): step 1/1. Inhibited by UTP. Catalyzes the reversible phosphorylation of UMP to UDP. This is Uridylate kinase from Hyperthermus butylicus (strain DSM 5456 / JCM 9403 / PLM1-5).